The chain runs to 29 residues: Kalata-B15 (29 aa).

Positions 1–29 form a cross-link, cyclopeptide (Gly-Asp); sequence GLPVCGESCFGGSCYTPGCSCTWPICTRD. Disulfide bonds link cysteine 5-cysteine 19, cysteine 9-cysteine 21, and cysteine 14-cysteine 26.

Post-translationally, this is a cyclic peptide.

Functionally, probably participates in a plant defense mechanism. The polypeptide is Kalata-B15 (Oldenlandia affinis).